A 282-amino-acid chain; its full sequence is Rhomboid protease GlpG (282 aa).

Helical transmembrane passes span 96–116 (AGPL…WMQF), 144–164 (GLLH…WYLG), 176–196 (LFVI…LFSG), 197–217 (SHFG…WLTG), 225–242 (IGVP…LIVG), and 247–269 (FGLS…MALW). S203 serves as the catalytic Nucleophile. H256 is an active-site residue.

It belongs to the peptidase S54 family.

The protein localises to the cell inner membrane. It catalyses the reaction Cleaves type-1 transmembrane domains using a catalytic dyad composed of serine and histidine that are contributed by different transmembrane domains.. Functionally, rhomboid-type serine protease that catalyzes intramembrane proteolysis. This Photorhabdus laumondii subsp. laumondii (strain DSM 15139 / CIP 105565 / TT01) (Photorhabdus luminescens subsp. laumondii) protein is Rhomboid protease GlpG.